The sequence spans 514 residues: Photosystem II CP47 reaction center protein (514 aa).

6 helical membrane passes run 21-36 (AVHL…WAGS), 109-123 (IVLS…VWHW), 148-164 (GGHL…FGTF), 211-226 (IAAG…FHLT), 245-260 (ALAS…AFVV), and 465-480 (CFAL…HGAR).

Belongs to the PsbB/PsbC family. PsbB subfamily. PSII is composed of 1 copy each of membrane proteins PsbA, PsbB, PsbC, PsbD, PsbE, PsbF, PsbH, PsbI, PsbJ, PsbK, PsbL, PsbM, PsbT, PsbX, PsbY, PsbZ, Psb30/Ycf12, peripheral proteins PsbO, CyanoQ (PsbQ), PsbU, PsbV and a large number of cofactors. It forms dimeric complexes. Binds multiple chlorophylls. PSII binds additional chlorophylls, carotenoids and specific lipids. serves as cofactor.

The protein resides in the cellular thylakoid membrane. Its function is as follows. One of the components of the core complex of photosystem II (PSII). It binds chlorophyll and helps catalyze the primary light-induced photochemical processes of PSII. PSII is a light-driven water:plastoquinone oxidoreductase, using light energy to abstract electrons from H(2)O, generating O(2) and a proton gradient subsequently used for ATP formation. The sequence is that of Photosystem II CP47 reaction center protein from Prochlorothrix hollandica.